A 161-amino-acid polypeptide reads, in one-letter code: 2-C-methyl-D-erythritol 2,4-cyclodiphosphate synthase (161 aa).

2 residues coordinate a divalent metal cation: Asp-10 and His-12. Residues 10–12 (DVH) and 36–37 (HS) contribute to the 4-CDP-2-C-methyl-D-erythritol 2-phosphate site. An a divalent metal cation-binding site is contributed by His-44. 4-CDP-2-C-methyl-D-erythritol 2-phosphate is bound by residues 58-60 (DIG), 63-67 (FPDTD), 134-137 (TTTE), Phe-141, and Arg-144.

Belongs to the IspF family. As to quaternary structure, homotrimer. Requires a divalent metal cation as cofactor.

It catalyses the reaction 4-CDP-2-C-methyl-D-erythritol 2-phosphate = 2-C-methyl-D-erythritol 2,4-cyclic diphosphate + CMP. It functions in the pathway isoprenoid biosynthesis; isopentenyl diphosphate biosynthesis via DXP pathway; isopentenyl diphosphate from 1-deoxy-D-xylulose 5-phosphate: step 4/6. In terms of biological role, involved in the biosynthesis of isopentenyl diphosphate (IPP) and dimethylallyl diphosphate (DMAPP), two major building blocks of isoprenoid compounds. Catalyzes the conversion of 4-diphosphocytidyl-2-C-methyl-D-erythritol 2-phosphate (CDP-ME2P) to 2-C-methyl-D-erythritol 2,4-cyclodiphosphate (ME-CPP) with a corresponding release of cytidine 5-monophosphate (CMP). In Shewanella putrefaciens (strain CN-32 / ATCC BAA-453), this protein is 2-C-methyl-D-erythritol 2,4-cyclodiphosphate synthase.